The following is a 572-amino-acid chain: Proline--tRNA ligase (572 aa).

This sequence belongs to the class-II aminoacyl-tRNA synthetase family. ProS type 1 subfamily. Homodimer.

It is found in the cytoplasm. It catalyses the reaction tRNA(Pro) + L-proline + ATP = L-prolyl-tRNA(Pro) + AMP + diphosphate. Its function is as follows. Catalyzes the attachment of proline to tRNA(Pro) in a two-step reaction: proline is first activated by ATP to form Pro-AMP and then transferred to the acceptor end of tRNA(Pro). As ProRS can inadvertently accommodate and process non-cognate amino acids such as alanine and cysteine, to avoid such errors it has two additional distinct editing activities against alanine. One activity is designated as 'pretransfer' editing and involves the tRNA(Pro)-independent hydrolysis of activated Ala-AMP. The other activity is designated 'posttransfer' editing and involves deacylation of mischarged Ala-tRNA(Pro). The misacylated Cys-tRNA(Pro) is not edited by ProRS. This is Proline--tRNA ligase from Haemophilus influenzae (strain PittGG).